The sequence spans 800 residues: Metabotropic glutamate receptor-like protein C (800 aa).

An N-terminal signal peptide occupies residues 1-21 (MKMKIIFLILILIFSINIIKC). At 22–392 (DKEFKMLTLL…EVEFSQSLQY (371 aa)) the chain is on the extracellular side. Residues Asn-69, Asn-107, Asn-166, Asn-258, Asn-276, Asn-302, and Asn-345 are each glycosylated (N-linked (GlcNAc...) asparagine). Residues 393-413 (GFSITTGVLIAITIIMMLGIV) form a helical membrane-spanning segment. Over 414-426 (RYKSTPSIRSASP) the chain is Cytoplasmic. A helical transmembrane segment spans residues 427–447 (IFLNFILAGGIIVYIGIIVWV). The Extracellular segment spans residues 448 to 463 (GPANDHQCNARLWLVT). The helical transmembrane segment at 464–484 (LGFSTLIGSLVVKNFRIWLIF) threads the bilayer. The Cytoplasmic segment spans residues 485–499 (DNPELKSISITNYQL). Residues 500–520 (FPWVGACLVINIILMSILTSV) traverse the membrane as a helical segment. Over 521–551 (GDLREIDAQGIDSLGKYEFMKVCKMNSSGAS) the chain is Extracellular. Asn-546 carries an N-linked (GlcNAc...) asparagine glycan. The chain crosses the membrane as a helical span at residues 552-572 (TLYTILAYFAALLLVGVFVSW). Topologically, residues 573-586 (KIRIVDIQEFNESK) are cytoplasmic. The chain crosses the membrane as a helical span at residues 587–607 (AIANTLYAISFCLFVIVPLMI). The Extracellular segment spans residues 608–616 (SPQDKQSET). A helical transmembrane segment spans residues 617 to 637 (IVLCTAGLFITTAALLIIFTP). Topologically, residues 638-800 (KFWRVFTLGD…NDTEEEDKNQ (163 aa)) are cytoplasmic. Disordered stretches follow at residues 658-694 (QSNV…TETS) and 718-800 (EFDD…DKNQ). A compositionally biased stretch (acidic residues) spans 718-732 (EFDDNNIEQDNDNDN). Residues 733-774 (DNNNNNNNNNNNNNNNNNNNNNNNNNNNNNNNNNNNNNNNNN) show a composition bias toward low complexity. Residues 781–791 (NDEKVEEKQQN) show a composition bias toward basic and acidic residues.

In the N-terminal section; belongs to the BMP lipoprotein family. The protein in the C-terminal section; belongs to the G-protein coupled receptor 3 family. GABA-B receptor subfamily.

Its subcellular location is the membrane. The sequence is that of Metabotropic glutamate receptor-like protein C (grlC) from Dictyostelium discoideum (Social amoeba).